The chain runs to 406 residues: Transposase for insertion sequence element IS1001 (406 aa).

Belongs to the transposase 12 family.

Its function is as follows. Involved in the transposition of the insertion sequence. In Bordetella parapertussis, this protein is Transposase for insertion sequence element IS1001 (tnpA).